Here is a 340-residue protein sequence, read N- to C-terminus: Uroporphyrinogen decarboxylase (340 aa).

Residues Arg21 to Arg25, Asp71, Tyr147, Ser202, and His316 each bind substrate.

It belongs to the uroporphyrinogen decarboxylase family. As to quaternary structure, homodimer.

It is found in the cytoplasm. It carries out the reaction uroporphyrinogen III + 4 H(+) = coproporphyrinogen III + 4 CO2. It functions in the pathway porphyrin-containing compound metabolism; protoporphyrin-IX biosynthesis; coproporphyrinogen-III from 5-aminolevulinate: step 4/4. Catalyzes the decarboxylation of four acetate groups of uroporphyrinogen-III to yield coproporphyrinogen-III. The polypeptide is Uroporphyrinogen decarboxylase (Nitratiruptor sp. (strain SB155-2)).